The following is a 336-amino-acid chain: Nicotinate-nucleotide--dimethylbenzimidazole phosphoribosyltransferase (336 aa).

Positions 20–41 are disordered; the sequence is GPDAAARAGAEERNGQLTKPPG. Catalysis depends on E304, which acts as the Proton acceptor.

It belongs to the CobT family.

The catalysed reaction is 5,6-dimethylbenzimidazole + nicotinate beta-D-ribonucleotide = alpha-ribazole 5'-phosphate + nicotinate + H(+). The protein operates within nucleoside biosynthesis; alpha-ribazole biosynthesis; alpha-ribazole from 5,6-dimethylbenzimidazole: step 1/2. In terms of biological role, catalyzes the synthesis of alpha-ribazole-5'-phosphate from nicotinate mononucleotide (NAMN) and 5,6-dimethylbenzimidazole (DMB). The chain is Nicotinate-nucleotide--dimethylbenzimidazole phosphoribosyltransferase from Ruegeria pomeroyi (strain ATCC 700808 / DSM 15171 / DSS-3) (Silicibacter pomeroyi).